A 217-amino-acid polypeptide reads, in one-letter code: Redox-sensing transcriptional repressor Rex (217 aa).

Positions 18–57 (LYYRFLKNLHASGKQRVSSAELSDAVKVDSATIRRDFSYF) form a DNA-binding region, H-T-H motif. 92–97 (GVGNLG) provides a ligand contact to NAD(+).

It belongs to the transcriptional regulatory Rex family. As to quaternary structure, homodimer.

The protein localises to the cytoplasm. Functionally, modulates transcription in response to changes in cellular NADH/NAD(+) redox state. This chain is Redox-sensing transcriptional repressor Rex, found in Bacillus pumilus (strain SAFR-032).